The chain runs to 86 residues: Large ribosomal subunit protein bL31B (86 aa).

This sequence belongs to the bacterial ribosomal protein bL31 family. Type B subfamily. As to quaternary structure, part of the 50S ribosomal subunit.

This is Large ribosomal subunit protein bL31B from Streptococcus equi subsp. zooepidemicus (strain H70).